A 103-amino-acid polypeptide reads, in one-letter code: Gene 56 protein (103 aa).

The region spanning 9 to 103 is the Glutaredoxin domain; it reads WDGAHVRTLF…DYYTASETGL (95 aa).

This chain is Gene 56 protein (56), found in Mycobacterium phage L5 (Mycobacteriophage L5).